We begin with the raw amino-acid sequence, 160 residues long: uncharacterized protein (160 aa).

Residues 7–151 enclose the N-acetyltransferase domain; sequence LLINFKTLEE…NPYIWHPDMD (145 aa).

This is an uncharacterized protein from Bacillus velezensis (strain DSM 23117 / BGSC 10A6 / LMG 26770 / FZB42) (Bacillus amyloliquefaciens subsp. plantarum).